A 162-amino-acid polypeptide reads, in one-letter code: Lectin BRA-3 (162 aa).

The signal sequence occupies residues 1–24 (MQRSEIVQAVTLLVVVFAITTAEC). The region spanning 25-152 (TCPGNLDWQE…NKNKNFLCKM (128 aa)) is the C-type lectin domain. Cystine bridges form between cysteine 26–cysteine 39, cysteine 56–cysteine 150, and cysteine 125–cysteine 142.

As to quaternary structure, homotetramer; disulfide-linked. As to expression, coelemic fluid.

Sugar-binding protein which recognizes specific carbohydrate structures and agglutinates a variety of animal cells by binding to cell-surface glycoproteins and glycolipids. Calcium-dependent lectin. Invertebrate lectins may be involved in defense functions. The protein is Lectin BRA-3 of Megabalanus rosa (Acorn barnacle).